The primary structure comprises 354 residues: UDP-N-acetylglucosamine--N-acetylmuramyl-(pentapeptide) pyrophosphoryl-undecaprenol N-acetylglucosamine transferase (354 aa).

UDP-N-acetyl-alpha-D-glucosamine-binding positions include 15–17 (TGG), Asn-127, Arg-163, Ser-191, Ile-244, 263–268 (ALTVSE), and Gln-288.

This sequence belongs to the glycosyltransferase 28 family. MurG subfamily.

It localises to the cell inner membrane. It carries out the reaction di-trans,octa-cis-undecaprenyl diphospho-N-acetyl-alpha-D-muramoyl-L-alanyl-D-glutamyl-meso-2,6-diaminopimeloyl-D-alanyl-D-alanine + UDP-N-acetyl-alpha-D-glucosamine = di-trans,octa-cis-undecaprenyl diphospho-[N-acetyl-alpha-D-glucosaminyl-(1-&gt;4)]-N-acetyl-alpha-D-muramoyl-L-alanyl-D-glutamyl-meso-2,6-diaminopimeloyl-D-alanyl-D-alanine + UDP + H(+). It participates in cell wall biogenesis; peptidoglycan biosynthesis. Cell wall formation. Catalyzes the transfer of a GlcNAc subunit on undecaprenyl-pyrophosphoryl-MurNAc-pentapeptide (lipid intermediate I) to form undecaprenyl-pyrophosphoryl-MurNAc-(pentapeptide)GlcNAc (lipid intermediate II). This chain is UDP-N-acetylglucosamine--N-acetylmuramyl-(pentapeptide) pyrophosphoryl-undecaprenol N-acetylglucosamine transferase, found in Aliivibrio fischeri (strain MJ11) (Vibrio fischeri).